A 273-amino-acid chain; its full sequence is 2,3,4,5-tetrahydropyridine-2,6-dicarboxylate N-succinyltransferase (273 aa).

Residues Arg105 and Asp142 each coordinate substrate.

It belongs to the transferase hexapeptide repeat family. In terms of assembly, homotrimer.

The protein resides in the cytoplasm. The catalysed reaction is (S)-2,3,4,5-tetrahydrodipicolinate + succinyl-CoA + H2O = (S)-2-succinylamino-6-oxoheptanedioate + CoA. It functions in the pathway amino-acid biosynthesis; L-lysine biosynthesis via DAP pathway; LL-2,6-diaminopimelate from (S)-tetrahydrodipicolinate (succinylase route): step 1/3. The sequence is that of 2,3,4,5-tetrahydropyridine-2,6-dicarboxylate N-succinyltransferase from Bordetella parapertussis (strain 12822 / ATCC BAA-587 / NCTC 13253).